Here is a 59-residue protein sequence, read N- to C-terminus: UPF0181 protein CKO_01169 (59 aa).

Belongs to the UPF0181 family.

The chain is UPF0181 protein CKO_01169 from Citrobacter koseri (strain ATCC BAA-895 / CDC 4225-83 / SGSC4696).